A 427-amino-acid chain; its full sequence is Phosphoribosylamine--glycine ligase (427 aa).

Positions 110–315 constitute an ATP-grasp domain; the sequence is KDFCQRHGLP…IVPILLAAAK (206 aa). Residue 136–196 coordinates ATP; it reads LDTLEAPFVI…EEFMHGEEAS (61 aa). Glu-285 and Asn-287 together coordinate Mg(2+).

Belongs to the GARS family. Requires Mg(2+) as cofactor. Mn(2+) is required as a cofactor.

The catalysed reaction is 5-phospho-beta-D-ribosylamine + glycine + ATP = N(1)-(5-phospho-beta-D-ribosyl)glycinamide + ADP + phosphate + H(+). It functions in the pathway purine metabolism; IMP biosynthesis via de novo pathway; N(1)-(5-phospho-D-ribosyl)glycinamide from 5-phospho-alpha-D-ribose 1-diphosphate: step 2/2. The protein is Phosphoribosylamine--glycine ligase of Caulobacter vibrioides (strain ATCC 19089 / CIP 103742 / CB 15) (Caulobacter crescentus).